Here is a 589-residue protein sequence, read N- to C-terminus: uncharacterized protein (589 aa).

14 helical membrane-spanning segments follow: residues 90 to 110 (YIVI…QTVI), 128 to 148 (SWIG…CGIM), 162 to 182 (IVLF…LWLV), 189 to 209 (GIGG…ITPL), 217 to 237 (GCMG…GGAI), 245 to 265 (WIFF…IFFL), 284 to 304 (FVGI…LNIG), 311 to 331 (AHAN…GFVV), 355 to 375 (VMVT…YIPV), 390 to 410 (VHTL…GMGI), 419 to 439 (PMIG…AIYY), 448 to 468 (GFLA…LIAV), 483 to 503 (AFML…AVIY), and 545 to 565 (IRMI…LSFF).

The protein belongs to the major facilitator superfamily. TCR/Tet family.

It localises to the membrane. This is an uncharacterized protein from Schizosaccharomyces pombe (strain 972 / ATCC 24843) (Fission yeast).